The chain runs to 1167 residues: C5a peptidase (1167 aa).

An N-terminal signal peptide occupies residues 1 to 31 (MRKKQKLPFDKLAIALMSTSILLNAQSDIKA). The span at 34-52 (VTEDTPVTEQAVETPQPTA) shows a compositional bias: polar residues. Residues 34–73 (VTEDTPVTEQAVETPQPTAVSEEVPSSKETKTPQTPDDAE) form a disordered region. The Peptidase S8 domain occupies 99-581 (KATIRDLNDP…AGAVDAKKAS (483 aa)). Catalysis depends on charge relay system residues aspartate 130, histidine 193, and serine 512. Positions 1029-1133 (EGHSNKPEQD…RDQLPTTNDK (105 aa)) are disordered. A run of 4 repeats spans residues 1034-1050 (KPEQDGSGQTPDKKPEA), 1051-1067 (KPEQDGSDQAPDKKPEA), 1068-1084 (KPEQDGSGQTPDKKPET), and 1085-1101 (KPEKDSSGQTPGKTPQK). Residues 1034–1101 (KPEQDGSGQT…GQTPGKTPQK (68 aa)) are 4 X 17 AA tandem repeats. Basic and acidic residues-rich tracts occupy residues 1044–1071 (PDKKPEAKPEQDGSDQAPDKKPEAKPEQ) and 1078–1090 (PDKKPETKPEKDS). Polar residues-rich tracts occupy residues 1092–1106 (GQTPGKTPQKGQPSR) and 1120–1130 (KASTRDQLPTT). Residues 1127–1131 (LPTTN) carry the LPXTG sorting signal motif. Pentaglycyl murein peptidoglycan amidated threonine is present on threonine 1130. The propeptide at 1131–1167 (NDKDTNRLHLLKLVMTTFFFGLVAHIFKTKRQKETKK) is removed by sortase.

It belongs to the peptidase S8 family. Post-translationally, cleaved by SpeB protease; leading to its degradation. Degradation by SpeB is probably strictly regulated to preserve integrity of C5a peptidase.

Its subcellular location is the secreted. The protein localises to the cell wall. It catalyses the reaction The primary cleavage site is at 67-His-|-Lys-68 in human C5a with a minor secondary cleavage site at 58-Ala-|-Ser-59.. Functionally, this virulence factor of S.pyogenes specifically cleaves the human serum chemotaxin C5a at '68-Lys-|-Asp-69' bond near its C-terminus, destroying its ability to serve as a chemoattractant. In Streptococcus pyogenes, this protein is C5a peptidase (scpA).